A 394-amino-acid polypeptide reads, in one-letter code: Phosphoglycerate kinase (394 aa).

Residues 21–23 (DFN), Arg-36, 59–62 (HLGR), Arg-118, and Arg-151 contribute to the substrate site. Ser-183 is subject to Phosphoserine. Lys-201 provides a ligand contact to ATP. Thr-299 is modified (phosphothreonine). ATP-binding positions include Glu-323 and 350–353 (GGDS).

Belongs to the phosphoglycerate kinase family. As to quaternary structure, monomer.

The protein localises to the cytoplasm. The enzyme catalyses (2R)-3-phosphoglycerate + ATP = (2R)-3-phospho-glyceroyl phosphate + ADP. It participates in carbohydrate degradation; glycolysis; pyruvate from D-glyceraldehyde 3-phosphate: step 2/5. This chain is Phosphoglycerate kinase, found in Halalkalibacterium halodurans (strain ATCC BAA-125 / DSM 18197 / FERM 7344 / JCM 9153 / C-125) (Bacillus halodurans).